The sequence spans 775 residues: 5-methyltetrahydropteroyltriglutamate--homocysteine methyltransferase (775 aa).

Residues 16–19 (REMK) and Lys115 each bind 5-methyltetrahydropteroyltri-L-glutamate. L-homocysteine is bound by residues 435-437 (IGS) and Glu488. Residues 435 to 437 (IGS) and Glu488 contribute to the L-methionine site. 5-methyltetrahydropteroyltri-L-glutamate-binding positions include 519–520 (RC) and Trp565. Asp603 serves as a coordination point for L-homocysteine. Asp603 is a binding site for L-methionine. Residue Glu609 participates in 5-methyltetrahydropteroyltri-L-glutamate binding. Residues His645, Cys647, and Glu669 each coordinate Zn(2+). The active-site Proton donor is the His698. Residue Cys730 coordinates Zn(2+).

Belongs to the vitamin-B12 independent methionine synthase family. The cofactor is Zn(2+).

It catalyses the reaction 5-methyltetrahydropteroyltri-L-glutamate + L-homocysteine = tetrahydropteroyltri-L-glutamate + L-methionine. Its pathway is amino-acid biosynthesis; L-methionine biosynthesis via de novo pathway; L-methionine from L-homocysteine (MetE route): step 1/1. Its function is as follows. Catalyzes the transfer of a methyl group from 5-methyltetrahydrofolate to homocysteine resulting in methionine formation. The chain is 5-methyltetrahydropteroyltriglutamate--homocysteine methyltransferase from Coxiella burnetii (strain CbuK_Q154) (Coxiella burnetii (strain Q154)).